The chain runs to 85 residues: Large ribosomal subunit protein bL27 (85 aa).

The interval Met-1–Leu-21 is disordered.

It belongs to the bacterial ribosomal protein bL27 family.

The sequence is that of Large ribosomal subunit protein bL27 from Geobacter sulfurreducens (strain ATCC 51573 / DSM 12127 / PCA).